The chain runs to 500 residues: Glycerol kinase (500 aa).

Threonine 14 is an ADP binding site. ATP-binding residues include threonine 14, threonine 15, and serine 16. Threonine 14 provides a ligand contact to sn-glycerol 3-phosphate. Position 18 (arginine 18) interacts with ADP. Sn-glycerol 3-phosphate is bound by residues arginine 84, glutamate 85, and tyrosine 136. Residues arginine 84, glutamate 85, and tyrosine 136 each coordinate glycerol. Histidine 232 bears the Phosphohistidine; by HPr mark. Residue aspartate 246 coordinates sn-glycerol 3-phosphate. Positions 246 and 247 each coordinate glycerol. Threonine 268 and glycine 311 together coordinate ADP. The ATP site is built by threonine 268, glycine 311, glutamine 315, and glycine 412. Residues glycine 412 and asparagine 416 each contribute to the ADP site.

This sequence belongs to the FGGY kinase family. Homotetramer and homodimer (in equilibrium). In terms of processing, the phosphoenolpyruvate-dependent sugar phosphotransferase system (PTS), including enzyme I, and histidine-containing protein (HPr) are required for the phosphorylation, which leads to the activation of the enzyme.

It catalyses the reaction glycerol + ATP = sn-glycerol 3-phosphate + ADP + H(+). The protein operates within polyol metabolism; glycerol degradation via glycerol kinase pathway; sn-glycerol 3-phosphate from glycerol: step 1/1. Its activity is regulated as follows. Activated by phosphorylation and inhibited by fructose 1,6-bisphosphate (FBP). In terms of biological role, key enzyme in the regulation of glycerol uptake and metabolism. Catalyzes the phosphorylation of glycerol to yield sn-glycerol 3-phosphate. The polypeptide is Glycerol kinase (Limosilactobacillus reuteri (strain DSM 20016) (Lactobacillus reuteri)).